The primary structure comprises 426 residues: CinA-like protein (426 aa).

The protein belongs to the CinA family.

This is CinA-like protein from Gloeobacter violaceus (strain ATCC 29082 / PCC 7421).